The following is a 433-amino-acid chain: tRNA(Ile)-lysidine synthase (433 aa).

27-32 provides a ligand contact to ATP; the sequence is SGGLDS.

This sequence belongs to the tRNA(Ile)-lysidine synthase family.

Its subcellular location is the cytoplasm. The enzyme catalyses cytidine(34) in tRNA(Ile2) + L-lysine + ATP = lysidine(34) in tRNA(Ile2) + AMP + diphosphate + H(+). Ligates lysine onto the cytidine present at position 34 of the AUA codon-specific tRNA(Ile) that contains the anticodon CAU, in an ATP-dependent manner. Cytidine is converted to lysidine, thus changing the amino acid specificity of the tRNA from methionine to isoleucine. This is tRNA(Ile)-lysidine synthase from Legionella pneumophila subsp. pneumophila (strain Philadelphia 1 / ATCC 33152 / DSM 7513).